Consider the following 61-residue polypeptide: Small ribosomal subunit protein uS14 (61 aa).

Residues Cys24, Cys27, Cys40, and Cys43 each contribute to the Zn(2+) site.

The protein belongs to the universal ribosomal protein uS14 family. Zinc-binding uS14 subfamily. Part of the 30S ribosomal subunit. Contacts proteins S3 and S10. Requires Zn(2+) as cofactor.

Its function is as follows. Binds 16S rRNA, required for the assembly of 30S particles and may also be responsible for determining the conformation of the 16S rRNA at the A site. The polypeptide is Small ribosomal subunit protein uS14 (Borrelia duttonii (strain Ly)).